We begin with the raw amino-acid sequence, 561 residues long: Acyl-CoA ligase frbB (561 aa).

ATP contacts are provided by residues 213-221 (TSGTSGAQK), 354-359 (PGWGLT), Asp437, Arg456, and Lys551. Residues 284–354 (DLKRVLGSIA…TLRPKWHLQP (71 aa)) form an SBD1 region. Residues 355–417 (GWGLTEGGGA…MKSPSVIAGY (63 aa)) form an SBD2 region.

This sequence belongs to the ATP-dependent AMP-binding enzyme family.

Its pathway is antifungal biosynthesis. Its function is as follows. Acyl-CoA ligase; part of the gene cluster that mediates the biosynthesis of the antifungal antibiotic FR901469, an inhibitor of beta-1,3-glucansynthase, exerting antifungal activity against the pathogenes Candida albicans and Aspergillus fumigatus. FR901469 is a cyclic depsipeptide containing 12 amino acid residues and a fatty acid chain. The NRPS frbI contains 12 modules responsible for the formation of the depsipeptide backbone which is denoted as Acyl-Thr-Ala-Tyr-Val-4OHPro-Thr-Thr-3OHPro-threo3OHGln-Gly-Thr-Orn-OH (C71H116N14O23). The PKS frbB is probably involved in the production of the hydrocarbon chain, and the acyl-CoA ligase frbC might be involved in the transport of the chain to the peptide ptoduct of frbI. Because FR901469 contains 3 hydroxylated amino acid residues, the 3 oxygenases frbA, frbH, and frbJ might be participating in amino acid hydroxylation. As no thioesterase domains were detected in frbI or frbB, the thioesterases frbD and frbE may instead release and cyclize the products of the NRPS and PKS, respectively. The sequence is that of Acyl-CoA ligase frbB from Dothideomycetidae sp. (strain 11243) (Fungal sp. (strain No.11243)).